Reading from the N-terminus, the 1197-residue chain is ATP-dependent helicase/nuclease subunit A (1197 aa).

One can recognise a UvrD-like helicase ATP-binding domain in the interval 2-458; the sequence is RQWTKEQQAA…IDLAKNFRSR (457 aa). 23-30 serves as a coordination point for ATP; that stretch reads AAAGSGKT. One can recognise a UvrD-like helicase C-terminal domain in the interval 485 to 774; that stretch reads RAALYQGTEF…RIMSIHKSKG (290 aa).

This sequence belongs to the helicase family. AddA subfamily. Heterodimer of AddA and AddB/RexB. It depends on Mg(2+) as a cofactor.

The catalysed reaction is Couples ATP hydrolysis with the unwinding of duplex DNA by translocating in the 3'-5' direction.. It carries out the reaction ATP + H2O = ADP + phosphate + H(+). Functionally, the heterodimer acts as both an ATP-dependent DNA helicase and an ATP-dependent, dual-direction single-stranded exonuclease. Recognizes the chi site generating a DNA molecule suitable for the initiation of homologous recombination. The AddA nuclease domain is required for chi fragment generation; this subunit has the helicase and 3' -&gt; 5' nuclease activities. The protein is ATP-dependent helicase/nuclease subunit A of Alkaliphilus oremlandii (strain OhILAs) (Clostridium oremlandii (strain OhILAs)).